The following is a 265-amino-acid chain: Thiazole synthase (265 aa).

The active-site Schiff-base intermediate with DXP is the lysine 107. Residues glycine 168, 194–195 (AG), and 216–217 (NT) contribute to the 1-deoxy-D-xylulose 5-phosphate site.

The protein belongs to the ThiG family. As to quaternary structure, homotetramer. Forms heterodimers with either ThiH or ThiS.

The protein localises to the cytoplasm. The catalysed reaction is [ThiS sulfur-carrier protein]-C-terminal-Gly-aminoethanethioate + 2-iminoacetate + 1-deoxy-D-xylulose 5-phosphate = [ThiS sulfur-carrier protein]-C-terminal Gly-Gly + 2-[(2R,5Z)-2-carboxy-4-methylthiazol-5(2H)-ylidene]ethyl phosphate + 2 H2O + H(+). It participates in cofactor biosynthesis; thiamine diphosphate biosynthesis. Functionally, catalyzes the rearrangement of 1-deoxy-D-xylulose 5-phosphate (DXP) to produce the thiazole phosphate moiety of thiamine. Sulfur is provided by the thiocarboxylate moiety of the carrier protein ThiS. In vitro, sulfur can be provided by H(2)S. This Pseudomonas aeruginosa (strain LESB58) protein is Thiazole synthase.